A 749-amino-acid polypeptide reads, in one-letter code: MGYIESSTFRLYAEVIVGSNINKVLDYGVPENLEHITKGTAVTISLRGGKKVGVIYQIKTTTQCKKILPILGLSDSEIVLPQDLLDLLFWISQYYFAPLGKTLKLFLPAISSNVIQPKQHYRVVLKQSKAKTKEILAKLEVLHPSQGAVLKILLQHASPPGLSSLMETAKVSQSPIHSLEKLGILDIVDAAQLELQEDLLTFFPPAPKDLHPEQQSAIDKIFSSLKTSQFHTHLLFGITGSGKTEIYLRATSEALKQGKSTILLVPEIALTVQTVSLFKARFGKDVGVLHHKLSDSDKSRTWRQASEGSLRILIGPRSALFCPMKNLGLIIVDEEHDPAYKQTESPPCYHARDVAVMRGKLAHATVVLGSATPSLESYTNALSGKYVLSRLSSRAAAAHPAKISLINMNLEREKSKTKILFSQPVLKKIAERLEVGEQVLIFFNRRGYHTNVSCTVCKHTLKCPHCDMVLTFHKYANVLLCHLCNSSPKDLPQSCPKCLGTMTLQYRGSGTEKIEKILQQIFPQIRTIRIDSDTTKFKGSHETLLRQFATGKADVLIGTQMIAKGMNFSAVTLAVILNGDSGLYIPDFRASEQVFQLITQVAGRSGRSHLPGEILIQSFLPDHPTIHSAMRQDYSAFYSQEITGRELCEYPPFIRLIRCIFMGKCPKQTWEEAHRVHNILKEQLESTNPLMPVTPCGHFKIKDTFRYQFLIKSAYVIPVNKKLHHALMLAKLSPKVKFMIDVDPMTTFF.

The 168-residue stretch at 224-391 (SLKTSQFHTH…LSGKYVLSRL (168 aa)) folds into the Helicase ATP-binding domain. Position 237–244 (237–244 (GITGSGKT)) interacts with ATP. The short motif at 333–336 (DEEH) is the DEAH box element. Zn(2+) contacts are provided by C454, C457, C463, C466, C481, C484, C495, and C498. In terms of domain architecture, Helicase C-terminal spans 490–658 (DLPQSCPKCL…EYPPFIRLIR (169 aa)).

It belongs to the helicase family. PriA subfamily. In terms of assembly, component of the replication restart primosome. Zn(2+) is required as a cofactor.

The catalysed reaction is Couples ATP hydrolysis with the unwinding of duplex DNA by translocating in the 3'-5' direction.. The enzyme catalyses ATP + H2O = ADP + phosphate + H(+). In terms of biological role, initiates the restart of stalled replication forks, which reloads the replicative helicase on sites other than the origin of replication. Recognizes and binds to abandoned replication forks and remodels them to uncover a helicase loading site. Promotes assembly of the primosome at these replication forks. The protein is Replication restart protein PriA of Chlamydia pneumoniae (Chlamydophila pneumoniae).